Reading from the N-terminus, the 578-residue chain is NADPH oxidase 4 (578 aa).

At 1 to 16 (MAVSWRSWLANEGVKH) the chain is on the cytoplasmic side. Residues 17–37 (LCLFIWLSMNVLLFWKTFLLY) form a helical membrane-spanning segment. Residues 38–62 (NQGPEYHYLHQMLGLGLCLSRASAS) are Extracellular-facing. A Ferric oxidoreductase domain is found at 58 to 303 (RASASVLNLN…YCAERLYRYI (246 aa)). Residues 63–83 (VLNLNCSLILLPMCRTLLAYL) traverse the membrane as a helical segment. Topologically, residues 84 to 103 (RGSQKVPSRRTRRLLDKSRT) are cytoplasmic. A helical transmembrane segment spans residues 104–124 (FHITCGVTICIFSGVHVAAHL). Residues 125-154 (VNALNFSVNYSEDFVELNAARYRDEDPRKL) lie on the Extracellular side of the membrane. The N-linked (GlcNAc...) asparagine glycan is linked to Asn133. A helical transmembrane segment spans residues 155 to 175 (LFTTVPGLTGVCMVVVLFLMI). The Cytoplasmic portion of the chain corresponds to 176–188 (TASTYAIRVSNYD). A helical transmembrane segment spans residues 189–209 (IFWYTHNLFFVFYMLLTLHVS). The Extracellular portion of the chain corresponds to 210–424 (GGLLKYQTNL…SPFEESLNYE (215 aa)). Positions 218–273 (NLDTHPPGCISLNRTSSQNISLPEYFSEHFHEPFPEGFSKPEEFTQNTFVKICMEE) are E-loop; essential for H2O2 generating catalytic activity. Asn230 is a glycosylation site (N-linked (GlcNAc...) asparagine). The interval 248 to 575 (HEPFPEGFSK…YGTRFEYNKE (328 aa)) is mediates interaction with TLR4. An FAD-binding FR-type domain is found at 304–419 (RSNKPVTIIS…DGPFGSPFEE (116 aa)). A helical transmembrane segment spans residues 425–445 (VSLCVAGGIGVTPFASILNTL). Residues 446–578 (LDDWKPYKLR…RFEYNKESFS (133 aa)) lie on the Cytoplasmic side of the membrane.

Interacts with, relocalizes and stabilizes CYBA/p22phox. Interacts with TLR4. Interacts with protein disulfide isomerase. Interacts with PPP1R15A. Interacts with LRRC8A; this interaction prevents the ubiquitin-mediated degradation of LRRC8A. Requires heme as cofactor. In terms of processing, N-glycosylation is required for the function.

The protein resides in the cytoplasm. It is found in the endoplasmic reticulum membrane. Its subcellular location is the cell membrane. It localises to the cell junction. The protein localises to the focal adhesion. The protein resides in the nucleus. The catalysed reaction is NADPH + 2 O2 = 2 superoxide + NADP(+) + H(+). It catalyses the reaction NADPH + O2 + H(+) = H2O2 + NADP(+). With respect to regulation, activated by insulin. Inhibited by diphenylene iodonium. Inhibited by plumbagin. Activated by phorbol 12-myristate 13-acetate (PMA). NADPH oxidase that catalyzes predominantly the reduction of oxygen to H2O2. Can also catalyze to a smaller extent, the reduction of oxygen to superoxide. May function as an oxygen sensor regulating the KCNK3/TASK-1 potassium channel and HIF1A activity. May regulate insulin signaling cascade. May play a role in apoptosis, bone resorption and lipolysaccharide-mediated activation of NFKB. May produce superoxide in the nucleus and play a role in regulating gene expression upon cell stimulation. Promotes ferroptosis, reactive oxygen species production and reduced glutathione (GSH) levels by activating NLRP3 inflammasome activation and cytokine release. This chain is NADPH oxidase 4 (NOX4), found in Pongo abelii (Sumatran orangutan).